A 635-amino-acid polypeptide reads, in one-letter code: MAADAPGDRMEEPLPDRAVPIYVAGFLALYDSGDSGELALDPDTVRAALPPDNPLPINVDHRAGCEVGRVLAVVDDPRGPFFVGLIACVQLERVLETAASAAIFERRGPPLSREERLLYLITNYLPSVSLATKRLGGEAHPDRTLFAHVALCAIGRRLGTIVTYDTGLDAAIAPFRHLSPASREGARRLAAEAELALSGRTWAPGVEALTHTLLSTAVNNMMLRDRWSLVAERRRQAGIAGHTYLQASEKFKMWGAEPVSAPARGYKNGAPESTDIPPGSIAAAPQGDRCPIVRQRGVALSPVLPPMNPVPTSGTPAPAPPGDGSYLWIPASHYNQLVAGHAAPQPQPHSAFGFPAAAGSVAYGPHGAGLSQHYPPHVAHQYPGVLFSGPSPLEAQIAALVGAIAADRQAGGQPAAGDPGVRGSGKRRRYEAGPSESYCDQDEPDADYPYYPGEARGAPRGVDSRRAARHSPGTNETITALMGAVTSLQQELAHMRARTSAPYGMYTPVAHYRPQVGEPEPTTTHPALCPPEAVYRPPPHSAPYGPPQGPASHAPTPPYAPAACPPGPPPPPCPSTQTRAPLPTEPAFPPAATGSQPEASNAEAGALVNASSAAHVDVDTARAADLFVSQMMGAR.

Catalysis depends on charge relay system residues His-61, Ser-129, and His-148. The interaction with pAP stretch occupies residues 324 to 343; the sequence is GSYLWIPASHYNQLVAGHAA. The span at 409–419 shows a compositional bias: low complexity; that stretch reads QAGGQPAAGDP. Disordered stretches follow at residues 409–476 and 514–606; these read QAGG…GTNE and PQVG…EAGA. The Nuclear localization signal signature appears at 426–429; the sequence is KRRR. Over residues 536–574 the composition is skewed to pro residues; it reads RPPPHSAPYGPPQGPASHAPTPPYAPAACPPGPPPPPCP. Positions 615–635 are interaction with major capsid protein; it reads HVDVDTARAADLFVSQMMGAR.

This sequence belongs to the herpesviridae capsid scaffolding protein family. Homomultimer. Interacts with major capsid protein. In terms of assembly, exists in a monomer-dimer equilibrium with the dimer being the active species. Capsid scaffolding protein is cleaved by assemblin after formation of the spherical procapsid. As a result, the capsid obtains its mature, icosahedral shape. Cleavages occur at two or more sites: release (R-site) and maturation (M-site).

The protein localises to the host cytoplasm. It is found in the host nucleus. The enzyme catalyses Cleaves -Ala-|-Ser- and -Ala-|-Ala- bonds in the scaffold protein.. In terms of biological role, acts as a scaffold protein by binding major capsid protein in the cytoplasm, inducing the nuclear localization of both proteins. Multimerizes in the nucleus such as major capsid protein forms the icosahedral T=16 capsid. Autocatalytic cleavage releases the assembly protein, and subsequently abolishes interaction with major capsid protein. Cleavages products are evicted from the capsid before or during DNA packaging. Protease that plays an essential role in virion assembly within the nucleus. Catalyzes the cleavage of the assembly protein after formation of the spherical procapsid. By that cleavage, the capsid matures and gains its icosahedral shape. The cleavage sites seem to include -Ala-Ser-, -Ala-Ala-, as well as Ala-Thr bonds. Assemblin and cleavages products are evicted from the capsid before or during DNA packaging. Functionally, plays a major role in capsid assembly. Acts as a scaffold protein by binding major capsid protein. Multimerizes in the nucleus such as major capsid protein forms the icosahedral T=16 capsid. Cleaved by assemblin after capsid completion. The cleavages products are evicted from the capsid before or during DNA packaging. The polypeptide is Capsid scaffolding protein (UL26) (Human herpesvirus 1 (strain 17) (HHV-1)).